Reading from the N-terminus, the 114-residue chain is MSIGLLCCVAFSLLWASPVNAGVTQTPKFQVLKTGQSMTLQCAQDMNHNSMYWYRQDPGMGLRLIYYSASEGTTDKGEVPNGYNVSRLNKREFSLRLESAAPSQTSVYFCASSE.

An N-terminal signal peptide occupies residues 1 to 21 (MSIGLLCCVAFSLLWASPVNA). The 93-residue stretch at 22-114 (GVTQTPKFQV…TSVYFCASSE (93 aa)) folds into the Ig-like domain. Cys42 and Cys110 form a disulfide bridge. Asn84 is a glycosylation site (N-linked (GlcNAc...) asparagine).

In terms of assembly, alpha-beta TR is a heterodimer composed of an alpha and beta chain; disulfide-linked. The alpha-beta TR is associated with the transmembrane signaling CD3 coreceptor proteins to form the TR-CD3 (TcR or TCR). The assembly of alpha-beta TR heterodimers with CD3 occurs in the endoplasmic reticulum where a single alpha-beta TR heterodimer associates with one CD3D-CD3E heterodimer, one CD3G-CD3E heterodimer and one CD247 homodimer forming a stable octameric structure. CD3D-CD3E and CD3G-CD3E heterodimers preferentially associate with TR alpha and TR beta chains, respectively. The association of the CD247 homodimer is the last step of TcR assembly in the endoplasmic reticulum and is required for transport to the cell surface.

It is found in the cell membrane. Its function is as follows. V region of the variable domain of T cell receptor (TR) beta chain that participates in the antigen recognition. Alpha-beta T cell receptors are antigen specific receptors which are essential to the immune response and are present on the cell surface of T lymphocytes. Recognize peptide-major histocompatibility (MH) (pMH) complexes that are displayed by antigen presenting cells (APC), a prerequisite for efficient T cell adaptive immunity against pathogens. Binding of alpha-beta TR to pMH complex initiates TR-CD3 clustering on the cell surface and intracellular activation of LCK that phosphorylates the ITAM motifs of CD3G, CD3D, CD3E and CD247 enabling the recruitment of ZAP70. In turn ZAP70 phosphorylates LAT, which recruits numerous signaling molecules to form the LAT signalosome. The LAT signalosome propagates signal branching to three major signaling pathways, the calcium, the mitogen-activated protein kinase (MAPK) kinase and the nuclear factor NF-kappa-B (NF-kB) pathways, leading to the mobilization of transcription factors that are critical for gene expression and essential for T cell growth and differentiation. The T cell repertoire is generated in the thymus, by V-(D)-J rearrangement. This repertoire is then shaped by intrathymic selection events to generate a peripheral T cell pool of self-MH restricted, non-autoaggressive T cells. Post-thymic interaction of alpha-beta TR with the pMH complexes shapes TR structural and functional avidity. The polypeptide is T cell receptor beta variable 6-1 (Homo sapiens (Human)).